We begin with the raw amino-acid sequence, 416 residues long: Serine hydroxymethyltransferase (416 aa).

Residues Leu121 and 125–127 (GHL) contribute to the (6S)-5,6,7,8-tetrahydrofolate site. Residue Lys229 is modified to N6-(pyridoxal phosphate)lysine. (6S)-5,6,7,8-tetrahydrofolate is bound at residue 354–356 (SPF).

Belongs to the SHMT family. In terms of assembly, homodimer. It depends on pyridoxal 5'-phosphate as a cofactor.

The protein localises to the cytoplasm. The catalysed reaction is (6R)-5,10-methylene-5,6,7,8-tetrahydrofolate + glycine + H2O = (6S)-5,6,7,8-tetrahydrofolate + L-serine. Its pathway is one-carbon metabolism; tetrahydrofolate interconversion. It functions in the pathway amino-acid biosynthesis; glycine biosynthesis; glycine from L-serine: step 1/1. Catalyzes the reversible interconversion of serine and glycine with tetrahydrofolate (THF) serving as the one-carbon carrier. This reaction serves as the major source of one-carbon groups required for the biosynthesis of purines, thymidylate, methionine, and other important biomolecules. Also exhibits THF-independent aldolase activity toward beta-hydroxyamino acids, producing glycine and aldehydes, via a retro-aldol mechanism. This chain is Serine hydroxymethyltransferase, found in Halorhodospira halophila (strain DSM 244 / SL1) (Ectothiorhodospira halophila (strain DSM 244 / SL1)).